A 136-amino-acid polypeptide reads, in one-letter code: MLQPKRTKFRKMHKGRNRGLAQGTDVSFGEFGLKACGRCRLTARQIEAARRAMTRAIKRQGKVWIRVFPDKPITEKPLEVRMGKGKGNVEYWVALIQPGKVLFEMAGVPEETAREAFKLAAAKLPVGTTFVTKTVM.

This sequence belongs to the universal ribosomal protein uL16 family. In terms of assembly, part of the 50S ribosomal subunit.

Binds 23S rRNA and is also seen to make contacts with the A and possibly P site tRNAs. The polypeptide is Large ribosomal subunit protein uL16 (Yersinia enterocolitica serotype O:8 / biotype 1B (strain NCTC 13174 / 8081)).